A 152-amino-acid chain; its full sequence is Deoxyuridine 5'-triphosphate nucleotidohydrolase (152 aa).

Substrate-binding positions include 72–74, N85, and 89–91; these read RSG and TVD.

This sequence belongs to the dUTPase family. It depends on Mg(2+) as a cofactor.

The enzyme catalyses dUTP + H2O = dUMP + diphosphate + H(+). It participates in pyrimidine metabolism; dUMP biosynthesis; dUMP from dCTP (dUTP route): step 2/2. Functionally, this enzyme is involved in nucleotide metabolism: it produces dUMP, the immediate precursor of thymidine nucleotides and it decreases the intracellular concentration of dUTP so that uracil cannot be incorporated into DNA. The sequence is that of Deoxyuridine 5'-triphosphate nucleotidohydrolase from Nitrobacter hamburgensis (strain DSM 10229 / NCIMB 13809 / X14).